A 246-amino-acid chain; its full sequence is DNA polymerase sliding clamp (246 aa).

The protein belongs to the PCNA family. Homotrimer. The subunits circularize to form a toroid; DNA passes through its center. Replication factor C (RFC) is required to load the toroid on the DNA.

Functionally, sliding clamp subunit that acts as a moving platform for DNA processing. Responsible for tethering the catalytic subunit of DNA polymerase and other proteins to DNA during high-speed replication. This chain is DNA polymerase sliding clamp, found in Thermoplasma acidophilum (strain ATCC 25905 / DSM 1728 / JCM 9062 / NBRC 15155 / AMRC-C165).